The primary structure comprises 65 residues: Small ribosomal subunit protein eS17 (65 aa).

It belongs to the eukaryotic ribosomal protein eS17 family.

This chain is Small ribosomal subunit protein eS17, found in Methanobrevibacter smithii (strain ATCC 35061 / DSM 861 / OCM 144 / PS).